The sequence spans 91 residues: Acylphosphatase (91 aa).

Residues 6 to 91 (CMRCYISGRV…WEDYISFDVL (86 aa)) enclose the Acylphosphatase-like domain. Residues Arg-21 and Asn-39 contribute to the active site.

Belongs to the acylphosphatase family.

The catalysed reaction is an acyl phosphate + H2O = a carboxylate + phosphate + H(+). The protein is Acylphosphatase (acyP) of Legionella pneumophila (strain Corby).